The chain runs to 248 residues: E3 ubiquitin-protein ligase BIG BROTHER (248 aa).

An RING-type; atypical zinc finger spans residues 197–238 (CVICQLKYKIGERQMNLPCKHVYHSECISKWLSINKVCPVCN).

Interacts with the E2 ubiquitin conjugating enzyme UBC10 via the RING domain. Interacts with DA1. In terms of processing, auto-ubiquitinated. As to expression, mostly expressed in inflorescence, and, to a lower extent, in seedlings, roots, stems, leaves and siliques.

It catalyses the reaction S-ubiquitinyl-[E2 ubiquitin-conjugating enzyme]-L-cysteine + [acceptor protein]-L-lysine = [E2 ubiquitin-conjugating enzyme]-L-cysteine + N(6)-ubiquitinyl-[acceptor protein]-L-lysine.. The protein operates within protein modification; protein ubiquitination. Functionally, E3 ubiquitin-protein ligase that limits organ size, and possibly seed size, in a dose-dependent manner. Negatively regulates the duration of cell proliferation in leaves and petals independently of the major phytohormones (e.g. auxin, cytokinin, gibberellin, brassinosteroids, ethylene, abscisic acid, jasmonic acid), probably by targeting growth stimulators for degradation. Limits the proliferation of root meristematic cells. Polyubiquitinates DA1. Involved in the promotion of leaf senescence, in addition to its function in restricting plant growth. Possesses E3 ubiquitin-protein ligase activity in vitro. This chain is E3 ubiquitin-protein ligase BIG BROTHER (BB), found in Arabidopsis thaliana (Mouse-ear cress).